The chain runs to 856 residues: Envelope glycoprotein gp150 (856 aa).

At 1-785 (MAEGFVANGQ…WIGNIPQYLK (785 aa)) the chain is on the extracellular side. N-linked (GlcNAc...) asparagine; by host glycans are attached at residues asparagine 220, asparagine 258, asparagine 269, asparagine 274, asparagine 298, asparagine 330, asparagine 336, asparagine 342, asparagine 418, asparagine 422, asparagine 448, asparagine 469, asparagine 481, asparagine 499, asparagine 518, asparagine 531, asparagine 548, asparagine 551, and asparagine 556. The tract at residues 616 to 636 (VMLALATVLSMAGAGTGATAI) is fusion peptide. The stretch at 643–693 (HQVLATQQEAIEKVTEALKITNLRLVTLEHQVLVIGLKVEAMEKFLYTAFA) forms a coiled coil. Residues 662-680 (ITNLRLVTLEHQVLVIGLK) form an immunosuppression region. N-linked (GlcNAc...) asparagine; by host glycosylation is found at asparagine 717, asparagine 721, asparagine 729, and asparagine 737. Residues 736 to 772 (YNQTKDLQKKFYGIIMDIEQNNVQGKKGLQQLQKWED) adopt a coiled-coil conformation. A helical transmembrane segment spans residues 786 to 806 (GLLGSIVGIGLGILLLILCLP). At 807–856 (TLVDCIRNCIHKILGYTVIAMPEVDGEEIQPQMELRRNGRQCGMSEKEEE) the chain is on the cytoplasmic side.

The mature envelope protein (Env) consists of a trimer of SU-TM heterodimers attached by noncovalent interactions or by a labile interchain disulfide bond. Specific enzymatic cleavages in vivo yield mature proteins. Envelope glycoproteins are synthesized as an inactive precursor that is N-glycosylated and processed likely by host cell furin or by a furin-like protease in the Golgi to yield the mature SU and TM proteins. The cleavage site between SU and TM requires the minimal sequence [KR]-X-[KR]-R.

The protein localises to the virion membrane. The protein resides in the host cell membrane. In terms of biological role, the surface protein (SU) attaches the virus to the host cell by binding to its receptor. This interaction triggers the refolding of the transmembrane protein (TM) and is thought to activate its fusogenic potential by unmasking its fusion peptide. Fusion occurs at the host cell plasma membrane. Functionally, the transmembrane protein (TM) acts as a class I viral fusion protein. Under the current model, the protein has at least 3 conformational states: pre-fusion native state, pre-hairpin intermediate state, and post-fusion hairpin state. During viral and target cell membrane fusion, the coiled coil regions (heptad repeats) assume a trimer-of-hairpins structure, positioning the fusion peptide in close proximity to the C-terminal region of the ectodomain. The formation of this structure appears to drive apposition and subsequent fusion of viral and target cell membranes. Membranes fusion leads to delivery of the nucleocapsid into the cytoplasm. The polypeptide is Envelope glycoprotein gp150 (env) (Feline immunodeficiency virus (strain UT-113) (FIV)).